The following is a 500-amino-acid chain: Lysine--tRNA ligase (500 aa).

Mg(2+) contacts are provided by E410 and E417.

Belongs to the class-II aminoacyl-tRNA synthetase family. As to quaternary structure, homodimer. The cofactor is Mg(2+).

It localises to the cytoplasm. The catalysed reaction is tRNA(Lys) + L-lysine + ATP = L-lysyl-tRNA(Lys) + AMP + diphosphate. This chain is Lysine--tRNA ligase, found in Pseudomonas syringae pv. syringae (strain B728a).